Reading from the N-terminus, the 352-residue chain is Phosphoribosylformylglycinamidine cyclo-ligase (352 aa).

This sequence belongs to the AIR synthase family.

The protein localises to the cytoplasm. It catalyses the reaction 2-formamido-N(1)-(5-O-phospho-beta-D-ribosyl)acetamidine + ATP = 5-amino-1-(5-phospho-beta-D-ribosyl)imidazole + ADP + phosphate + H(+). The protein operates within purine metabolism; IMP biosynthesis via de novo pathway; 5-amino-1-(5-phospho-D-ribosyl)imidazole from N(2)-formyl-N(1)-(5-phospho-D-ribosyl)glycinamide: step 2/2. In Azoarcus sp. (strain BH72), this protein is Phosphoribosylformylglycinamidine cyclo-ligase.